The sequence spans 432 residues: MLLSKYFLPILKEEPSEAKVISHKLMLRSGMIMKQAAGLYTWLPLGLKVLKNIENVVRSNMNKVGALEVLMPCIQPAHLWIESGRFEHYGKEMLKFQDRHDNTLLFGPTNEDMITDIFRRNIKSYKDLPKNLYHIQWKFRDEIRPRFGVMRGREFLMKDAYSFDINQKNAVNTYNKMYKAYMNTFRDLGVFAIPVIADNGPIGGNLSHEFHIVAETGESTIYYDKRFKILKDNPDIDVEEIKGWYAAAEEKHDVNKLSSFPEGITRSKGIEVGHIFYIGSKYSVNMNALINDEYGKLIPVEMSSYGIGISRLAAAIIEANCDKKGIIWPCSVAPFKVSLINLNIHDNKCVELAAKTDKELSHQNIEVLYDDTDARPGSKFATHDLIGSPYQIIIGPKKAANNIVELKDRKTGVLEDIEVENIINYIKNIDSI.

It belongs to the class-II aminoacyl-tRNA synthetase family. ProS type 2 subfamily. In terms of assembly, homodimer.

It is found in the cytoplasm. It carries out the reaction tRNA(Pro) + L-proline + ATP = L-prolyl-tRNA(Pro) + AMP + diphosphate. Functionally, catalyzes the attachment of proline to tRNA(Pro) in a two-step reaction: proline is first activated by ATP to form Pro-AMP and then transferred to the acceptor end of tRNA(Pro). In Rickettsia prowazekii (strain Madrid E), this protein is Proline--tRNA ligase.